The primary structure comprises 494 residues: MFLAKSIVCLALLAVANAQFNTNYASGRSGMVHLFEWKWDDIAAECENFLGPYGYAGVQVSPVNENAVKDSRPWWERYQPISYKLVTRSGNEEQFASMVRRCNNVGVRIYVDVVFNHMAADGGTYGTGGSTASPSSKSYPGVPFSSLDFNPTCAISNYNDANQVRNCELVGLRDLNQGNSYVQEKIVEFLNHLIDLGVAGFRVDAAKHMWPADLGVIYGSLKNLNTDHGFESGAKAYIVQEVIDMGGEAISKSEYTGLGAITEFRHSDSIGKAFRGKNQLQYLVNWGVSWGFAASDRSLVFVDNHDNQRGHGAGGADVLTYKVPKQYKMASAFMLAHPFGTPRVMSSFSFTDTDQGPPTTDGQNIASPSFNSDNSCSGGWVCEHRWKQIYNMVGFRNAVGSDAIQNWWDNGSNQIAFSRGSKGFVAFNNDNYDLNSSVQTGLPAGTYCDVISGSKSGSSCTGKTVTVGSDGRANISIGSSEDDGVLAIHVNAKL.

Residues 1 to 18 (MFLAKSIVCLALLAVANA) form the signal peptide. A disulfide bridge links Cys46 with Cys102. Ca(2+) contacts are provided by Asn116, Arg165, and Asp174. Cys153 and Cys167 form a disulfide bridge. Chloride is bound at residue Arg202. Asp204 functions as the Nucleophile in the catalytic mechanism. His208 is a binding site for Ca(2+). The Proton donor role is filled by Glu241. Residues Asn304 and Arg343 each contribute to the chloride site. The tract at residues 350 to 370 (FTDTDQGPPTTDGQNIASPSF) is disordered. Residues 351 to 363 (TDTDQGPPTTDGQ) are compositionally biased toward low complexity. Disulfide bonds link Cys376-Cys382 and Cys448-Cys460.

The protein belongs to the glycosyl hydrolase 13 family. As to quaternary structure, monomer. The cofactor is Ca(2+). It depends on chloride as a cofactor.

It catalyses the reaction Endohydrolysis of (1-&gt;4)-alpha-D-glucosidic linkages in polysaccharides containing three or more (1-&gt;4)-alpha-linked D-glucose units.. In Drosophila ananassae (Fruit fly), this protein is Alpha-amylase 2 (Amy58).